A 272-amino-acid polypeptide reads, in one-letter code: Indole-3-glycerol phosphate synthase (272 aa).

It belongs to the TrpC family.

It carries out the reaction 1-(2-carboxyphenylamino)-1-deoxy-D-ribulose 5-phosphate + H(+) = (1S,2R)-1-C-(indol-3-yl)glycerol 3-phosphate + CO2 + H2O. The protein operates within amino-acid biosynthesis; L-tryptophan biosynthesis; L-tryptophan from chorismate: step 4/5. The sequence is that of Indole-3-glycerol phosphate synthase from Mycolicibacterium gilvum (strain PYR-GCK) (Mycobacterium gilvum (strain PYR-GCK)).